A 157-amino-acid chain; its full sequence is NAD(P)H-quinone oxidoreductase subunit N (157 aa).

This sequence belongs to the complex I NdhN subunit family. As to quaternary structure, NDH-1 can be composed of about 15 different subunits; different subcomplexes with different compositions have been identified which probably have different functions.

The protein localises to the cellular thylakoid membrane. It catalyses the reaction a plastoquinone + NADH + (n+1) H(+)(in) = a plastoquinol + NAD(+) + n H(+)(out). It carries out the reaction a plastoquinone + NADPH + (n+1) H(+)(in) = a plastoquinol + NADP(+) + n H(+)(out). Functionally, NDH-1 shuttles electrons from an unknown electron donor, via FMN and iron-sulfur (Fe-S) centers, to quinones in the respiratory and/or the photosynthetic chain. The immediate electron acceptor for the enzyme in this species is believed to be plastoquinone. Couples the redox reaction to proton translocation, and thus conserves the redox energy in a proton gradient. Cyanobacterial NDH-1 also plays a role in inorganic carbon-concentration. In Picosynechococcus sp. (strain ATCC 27264 / PCC 7002 / PR-6) (Agmenellum quadruplicatum), this protein is NAD(P)H-quinone oxidoreductase subunit N.